The sequence spans 403 residues: Argininosuccinate synthase 1 (403 aa).

ATP is bound by residues 10–18 (SYSGGLDTS) and Ala-37. Positions 88 and 93 each coordinate L-citrulline. Residue Gly-118 participates in ATP binding. Residues Thr-120, Asn-124, and Asp-125 each contribute to the L-aspartate site. Asn-124 is an L-citrulline binding site. Arg-128, Ser-179, Ser-188, Glu-264, and Tyr-276 together coordinate L-citrulline.

The protein belongs to the argininosuccinate synthase family. Type 1 subfamily. As to quaternary structure, homotetramer.

Its subcellular location is the cytoplasm. It carries out the reaction L-citrulline + L-aspartate + ATP = 2-(N(omega)-L-arginino)succinate + AMP + diphosphate + H(+). Its pathway is amino-acid biosynthesis; L-arginine biosynthesis; L-arginine from L-ornithine and carbamoyl phosphate: step 2/3. In Rhizobium johnstonii (strain DSM 114642 / LMG 32736 / 3841) (Rhizobium leguminosarum bv. viciae), this protein is Argininosuccinate synthase 1.